A 573-amino-acid chain; its full sequence is MDCPLENVLDLIKYFRKEWPVVSDSERTTIYGADNMLLTLQLALAEVNKQNGKEFSASLSDVLLTWKCLVKHKLGLAYEDTAVPENYADIRKTYELFLKTSNSLDLIDIYEKISTLGSSEPHNFTSEQLLEFLTEDECFSGDKDFPVVSTPCKNNFDVVKVKATLKRIFLAYLNLLVNSKNDFALAQVLNCPERGLGREAFTDLKHTSRMKNMSLFLVATSFIRTIELGGKGYAPSESDPLRKHLKGLSLFVHFVDRLNEVLGETNDPRTAGELLLSTIKMHLIKGRSSGDPLSEAATDVAQDLDLRIKNLINLLSEDKYSVTPGISPARPKIHAINRGTASGGREMIKTLLKLLDEEAANPPSKNKADLLCADEENTLFGAVSLFTLFRSPEQKNGSSPKPLSHRVQKAMDKNKPKLKQNLIRSQFACTYKDGNLAQIKQWDFPSLSQVPTCIHPAPRIAPVLCFDEEPLENSDLQKQELKLSSGNIDLKTGGQVKNKPCKNVANKRSKRKQVDIQSETTNAQENEPPQKKAVVEITSKKENKPCVTRNCNKSSSKNKLIAGQAKLTSFFRV.

Positions 492 to 532 (TGGQVKNKPCKNVANKRSKRKQVDIQSETTNAQENEPPQKK) are disordered. Polar residues predominate over residues 515–527 (DIQSETTNAQENE).

This sequence belongs to the PARI family.

The protein resides in the cytoplasm. The protein localises to the nucleus. Required to suppress inappropriate homologous recombination, thereby playing a central role DNA repair and in the maintenance of genomic stability. This chain is PCNA-interacting partner (parpbp), found in Xenopus tropicalis (Western clawed frog).